The chain runs to 712 residues: Polyribonucleotide nucleotidyltransferase (712 aa).

2 residues coordinate Mg(2+): D493 and D499. Positions 560-622 (PRLTKLTIDP…RDAEAAIERI (63 aa)) constitute a KH domain. Residues 632–700 (GEDYVGTVKG…DDGKMRLTRK (69 aa)) form the S1 motif domain.

The protein belongs to the polyribonucleotide nucleotidyltransferase family. Mg(2+) serves as cofactor.

It is found in the cytoplasm. The catalysed reaction is RNA(n+1) + phosphate = RNA(n) + a ribonucleoside 5'-diphosphate. In terms of biological role, involved in mRNA degradation. Catalyzes the phosphorolysis of single-stranded polyribonucleotides processively in the 3'- to 5'-direction. This chain is Polyribonucleotide nucleotidyltransferase, found in Salinibacter ruber (strain DSM 13855 / M31).